We begin with the raw amino-acid sequence, 287 residues long: Phosphate transport system permease protein PstA (287 aa).

Transmembrane regions (helical) follow at residues 22–42, 70–90, 115–135, 138–158, 199–219, and 255–275; these read ISCIAALFGLFFLIWILWTLI, AFLGSAIMCLLAIVIGTPVGI, ILLSAPSIVLGLFVYTLYVMH, GHFSAFSGALALVFIVLPIVV, ILTGILLALARISGETAPLLF, and LLAWSGALVLTVFVLLVSLGA. In terms of domain architecture, ABC transmembrane type-1 spans 71–279; the sequence is FLGSAIMCLL…LVSLGARALL (209 aa).

This sequence belongs to the binding-protein-dependent transport system permease family. CysTW subfamily.

It localises to the cell inner membrane. Its function is as follows. Part of a binding-protein-dependent transport system for phosphate; probably responsible for the translocation of the substrate across the membrane. This chain is Phosphate transport system permease protein PstA (pstA), found in Xylella fastidiosa (strain Temecula1 / ATCC 700964).